A 1979-amino-acid polypeptide reads, in one-letter code: Repetitive organellar protein (1979 aa).

Over residues 1–12 the composition is skewed to basic residues; it reads MVFTFKNKKKKK. 2 disordered regions span residues 1 to 42 and 54 to 116; these read MVFT…DSWY and TKYK…NNYS. Basic and acidic residues-rich tracts occupy residues 13 to 24 and 31 to 42; these read EASSDKVSKESF and NNEKREKSDSWY. Over residues 68–114 the composition is skewed to low complexity; the sequence is EDIINNNNNNNNDNNNDNNNDNNNDNNNDNNNDNNNENNNDNNNFNN. 6 coiled-coil regions span residues 127 to 366, 412 to 666, 693 to 876, 992 to 1094, 1126 to 1307, and 1398 to 1467; these read DNEL…LKDE, LKVY…EMEL, LKES…KKKQ, KKKH…YKTI, VDKI…MNIK, and IANY…LTSQ.

Its subcellular location is the host cell membrane. The protein is Repetitive organellar protein of Plasmodium falciparum (isolate 3D7).